The chain runs to 934 residues: Bifunctional uridylyltransferase/uridylyl-removing enzyme (934 aa).

The uridylyltransferase stretch occupies residues Met1 to Ser379. Positions Asp380–Thr736 are uridylyl-removing. In terms of domain architecture, HD spans Val496–Met613. ACT domains follow at residues Glu737–Ala818 and Val848–Gln931.

This sequence belongs to the GlnD family. It depends on Mg(2+) as a cofactor.

The enzyme catalyses [protein-PII]-L-tyrosine + UTP = [protein-PII]-uridylyl-L-tyrosine + diphosphate. The catalysed reaction is [protein-PII]-uridylyl-L-tyrosine + H2O = [protein-PII]-L-tyrosine + UMP + H(+). Its activity is regulated as follows. Uridylyltransferase (UTase) activity is inhibited by glutamine, while glutamine activates uridylyl-removing (UR) activity. Modifies, by uridylylation and deuridylylation, the PII regulatory proteins (GlnB and homologs), in response to the nitrogen status of the cell that GlnD senses through the glutamine level. Under low glutamine levels, catalyzes the conversion of the PII proteins and UTP to PII-UMP and PPi, while under higher glutamine levels, GlnD hydrolyzes PII-UMP to PII and UMP (deuridylylation). Thus, controls uridylylation state and activity of the PII proteins, and plays an important role in the regulation of nitrogen assimilation and metabolism. The chain is Bifunctional uridylyltransferase/uridylyl-removing enzyme from Brucella ovis (strain ATCC 25840 / 63/290 / NCTC 10512).